The primary structure comprises 113 residues: ATP-dependent Clp protease adapter protein ClpS (113 aa).

The interval methionine 1–threonine 24 is disordered.

It belongs to the ClpS family. Binds to the N-terminal domain of the chaperone ClpA.

Its function is as follows. Involved in the modulation of the specificity of the ClpAP-mediated ATP-dependent protein degradation. In Ruegeria pomeroyi (strain ATCC 700808 / DSM 15171 / DSS-3) (Silicibacter pomeroyi), this protein is ATP-dependent Clp protease adapter protein ClpS.